The chain runs to 367 residues: tRNA 2-selenouridine synthase (367 aa).

The Rhodanese domain occupies 12–136; the sequence is FLNDRPLMDA…LRGFLIDTLE (125 aa). Catalysis depends on Cys-95, which acts as the S-selanylcysteine intermediate.

Belongs to the SelU family. In terms of assembly, monomer.

It carries out the reaction 5-methylaminomethyl-2-thiouridine(34) in tRNA + selenophosphate + (2E)-geranyl diphosphate + H2O + H(+) = 5-methylaminomethyl-2-selenouridine(34) in tRNA + (2E)-thiogeraniol + phosphate + diphosphate. The enzyme catalyses 5-methylaminomethyl-2-thiouridine(34) in tRNA + (2E)-geranyl diphosphate = 5-methylaminomethyl-S-(2E)-geranyl-thiouridine(34) in tRNA + diphosphate. The catalysed reaction is 5-methylaminomethyl-S-(2E)-geranyl-thiouridine(34) in tRNA + selenophosphate + H(+) = 5-methylaminomethyl-2-(Se-phospho)selenouridine(34) in tRNA + (2E)-thiogeraniol. It catalyses the reaction 5-methylaminomethyl-2-(Se-phospho)selenouridine(34) in tRNA + H2O = 5-methylaminomethyl-2-selenouridine(34) in tRNA + phosphate. Its function is as follows. Involved in the post-transcriptional modification of the uridine at the wobble position (U34) of tRNA(Lys), tRNA(Glu) and tRNA(Gln). Catalyzes the conversion of 2-thiouridine (S2U-RNA) to 2-selenouridine (Se2U-RNA). Acts in a two-step process involving geranylation of 2-thiouridine (S2U) to S-geranyl-2-thiouridine (geS2U) and subsequent selenation of the latter derivative to 2-selenouridine (Se2U) in the tRNA chain. In Pseudomonas fluorescens (strain Pf0-1), this protein is tRNA 2-selenouridine synthase.